The primary structure comprises 303 residues: Recombination-associated protein RdgC (303 aa).

Belongs to the RdgC family.

Its subcellular location is the cytoplasm. The protein resides in the nucleoid. In terms of biological role, may be involved in recombination. The polypeptide is Recombination-associated protein RdgC (Enterobacter sp. (strain 638)).